Here is a 524-residue protein sequence, read N- to C-terminus: MELGPEPPHRRRLLFACSPPPASQPVVKALFGASAAGGLSPVTNLTVTMDQLQGLGSDYEQPLEVKNNSNLQRMGSSESTDSGFCLDSPGPLDSKENLENPMRRIHSLPQKLLGCSPALKRSHSDSLDHDIFQLIDPDENKENEAFEFKKPVRPVSRGCLHSHGLQEGKDLFTQRQNSAPARMLSSNERDSSEPGNFIPLFTPQSPVTATLSDEDDGFVDLLDGENLKNEEETPSCMASLWTAPLVMRTTNLDNRCKLFDSPSLCSSSTRSVLKRPERSQEESPPGSTKRRKSMSGASPKESTNPEKAHETLHQSLSLASSPKGTIENILDNDPRDLIGDFSKGYLFHTVAGKHQDLKYISPEIMASVLNGKFANLIKEFVIIDCRYPYEYEGGHIKGAVNLHMEEEVEDFLLKKPIVPTDGKRVIVVFHCEFSSERGPRMCRYVRERDRLGNEYPKLHYPELYVLKGGYKEFFMKCQSYCEPPSYRPMHHEDFKEDLKKFRTKSRTWAGEKSKREMYSRLKKL.

Positions 74–84 (MGSSESTDSGF) match the Phosphodegron motif. The residue at position 76 (Ser-76) is a Phosphoserine; by CHEK1. 3 positions are modified to phosphoserine; by NEK11: Ser-79, Ser-82, and Ser-88. Ser-107 is subject to Phosphoserine. Phosphoserine; by CHEK1 and CHEK2 is present on Ser-124. The KEN box motif lies at 141 to 143 (KEN). Residue Ser-178 is modified to Phosphoserine; by CHEK1. A disordered region spans residues 264–317 (LCSSSTRSVLKRPERSQEESPPGSTKRRKSMSGASPKESTNPEKAHETLHQSLS). Phosphoserine; by CHEK1 and CHEK2 is present on residues Ser-279 and Ser-293. Residues 303-312 (TNPEKAHETL) are compositionally biased toward basic and acidic residues. Ser-321 is subject to Phosphoserine. Residues 376–482 (LIKEFVIIDC…FFMKCQSYCE (107 aa)) form the Rhodanese domain. The active site involves Cys-431. Thr-507 carries the post-translational modification Phosphothreonine; by CHEK1. 2 positions are modified to phosphoserine; by PLK3: Ser-513 and Ser-519.

Belongs to the MPI phosphatase family. As to quaternary structure, interacts with CCNB1/cyclin B1. Interacts with YWHAE/14-3-3 epsilon when phosphorylated. Interacts with CUL1 specifically when CUL1 is neddylated and active. Interacts with BTRC/BTRCP1 and FBXW11/BTRCP2. Interactions with CUL1, BTRC and FBXW11 are enhanced upon DNA damage. Interacts with CHEK2; mediates CDC25A phosphorylation and degradation in response to infrared-induced DNA damages. Interacts with HSP90AB1; prevents heat shock-mediated CDC25A degradation and contributes to cell cycle progression. Post-translationally, phosphorylated by CHEK1 on Ser-76, Ser-124, Ser-178, Ser-279, Ser-293 and Thr-507 during checkpoint mediated cell cycle arrest. Also phosphorylated by CHEK2 on Ser-124, Ser-279, and Ser-293 during checkpoint mediated cell cycle arrest. Phosphorylation on Ser-178 and Thr-507 creates binding sites for YWHAE/14-3-3 epsilon which inhibits CDC25A. Phosphorylation on Ser-76, Ser-124, Ser-178, Ser-279 and Ser-293 may also promote ubiquitin-dependent proteolysis of CDC25A by the SCF complex. Phosphorylation of CDC25A at Ser-76 by CHEK1 primes it for subsequent phosphorylation at Ser-79, Ser-82 and Ser-88 by NEK11. Phosphorylation by NEK11 is required for BTRC-mediated polyubiquitination and degradation. Phosphorylation by PIM1 leads to an increase in phosphatase activity. Phosphorylated by PLK3 following DNA damage, leading to promote its ubiquitination and degradation. In terms of processing, ubiquitinated by the anaphase promoting complex/cyclosome (APC/C) ubiquitin ligase complex that contains FZR1/CDH1 during G1 phase leading to its degradation by the proteasome. Ubiquitinated by a SCF complex containing BTRC and FBXW11 during S phase leading to its degradation by the proteasome. Deubiquitination by USP17L2/DUB3 leads to its stabilization.

It catalyses the reaction O-phospho-L-tyrosyl-[protein] + H2O = L-tyrosyl-[protein] + phosphate. Its activity is regulated as follows. Stimulated by B-type cyclins. Stimulated by PIM1-mediated phosphorylation. Its function is as follows. Tyrosine protein phosphatase which functions as a dosage-dependent inducer of mitotic progression. Directly dephosphorylates CDK1 and stimulates its kinase activity. Also dephosphorylates CDK2 in complex with cyclin-E, in vitro. The chain is M-phase inducer phosphatase 1 (CDC25A) from Homo sapiens (Human).